The chain runs to 67 residues: Large ribosomal subunit protein bL35 (67 aa).

It belongs to the bacterial ribosomal protein bL35 family.

This Gloeothece citriformis (strain PCC 7424) (Cyanothece sp. (strain PCC 7424)) protein is Large ribosomal subunit protein bL35.